The chain runs to 307 residues: Dihydroorotate dehydrogenase A (fumarate) (307 aa).

FMN contacts are provided by residues serine 21 and 46 to 47; that span reads KT. Substrate-binding positions include lysine 46, 70–74, and asparagine 130; that span reads NSVGL. Asparagine 130 contacts FMN. Cysteine 133 acts as the Nucleophile in catalysis. FMN contacts are provided by lysine 168 and isoleucine 194. Substrate is bound at residue 195–196; that stretch reads NT. Residues glycine 220, 246–247, and 268–269 contribute to the FMN site; these read GG and GS.

The protein belongs to the dihydroorotate dehydrogenase family. Type 1 subfamily. Homodimer. FMN serves as cofactor.

The protein resides in the cytoplasm. The enzyme catalyses (S)-dihydroorotate + fumarate = orotate + succinate. It participates in pyrimidine metabolism; UMP biosynthesis via de novo pathway. Its function is as follows. Catalyzes the conversion of dihydroorotate to orotate with fumarate as the electron acceptor. The chain is Dihydroorotate dehydrogenase A (fumarate) (pyrD) from Lactobacillus delbrueckii subsp. bulgaricus (strain ATCC 11842 / DSM 20081 / BCRC 10696 / JCM 1002 / NBRC 13953 / NCIMB 11778 / NCTC 12712 / WDCM 00102 / Lb 14).